The chain runs to 452 residues: Golgi reassembly-stacking protein 2 (452 aa).

A lipid anchor (N-myristoyl glycine) is attached at G2. PDZ GRASP-type domains follow at residues 15-105 (EGYH…FCSF) and 111-199 (NVWH…YGYL). A GRASP region spans residues 15–215 (EGYHVLRVQE…PFEEGKKISL (201 aa)). 2 positions are modified to dimethylated arginine: R30 and R47. An important for membrane binding region spans residues 194–199 (IGYGYL). Phosphoserine is present on S214. Phosphothreonine occurs at positions 222 and 225. Positions 372 to 424 (PESSSAASSGELLSSLPPTSNAPSDPATTTAKADAASSLTVDVTPPTAKAPTT) are enriched in low complexity. Residues 372-452 (PESSSAASSG…AVDANASESP (81 aa)) are disordered. A Phosphoserine modification is found at S409. A phosphothreonine mark is found at T415 and T433. S436, S441, S449, and S451 each carry phosphoserine.

The protein belongs to the GORASP family. As to quaternary structure, homodimer. Homooligomer. ER stress induces phosphorylation-dependent monomerization. Interacts with BLZF1/Golgin 45. Identified in a complex with RAB2 and GORASP2. Interacts with JAM2 and JAM3. Interacts with members of the p24 cargo receptors. Interacts with CNIH1 and the cytoplasmic domain of transmembrane TGFA, prior its transit in the trans-Golgi. Interacts with KCTD5. Interacts with TMED2 and TMED3. Interacts with SEC16A in response to ER stress. Interacts (via PDZ GRASP-type 1 domain) with core-glycosylated CFTR in response to ER stress. Post-translationally, myristoylated. Myristoylation is essential for the Golgi targeting. In terms of processing, palmitoylated. Phosphorylated in mitotic cells. ER stress-induced phosphorylation at Ser-441 induces monomerization and subsequent relocalization from Golgi to ER which is essential for mediating unconventional (ER/Golgi-independent) trafficking of CFTR to the cell membrane.

It is found in the golgi apparatus membrane. Its subcellular location is the endoplasmic reticulum membrane. It localises to the golgi apparatus. Key structural protein of the Golgi apparatus. The membrane cisternae of the Golgi apparatus adhere to each other to form stacks, which are aligned side by side to form the Golgi ribbon. Acting in concert with GORASP1/GRASP65, is required for the formation and maintenance of the Golgi ribbon, and may be dispensable for the formation of stacks. However, other studies suggest that GORASP2 plays a role in the assembly and membrane stacking of the Golgi cisternae, and in the process by which Golgi stacks reform after breakdown during mitosis and meiosis. May regulate the intracellular transport and presentation of a defined set of transmembrane proteins, such as transmembrane TGFA. Required for normal acrosome formation during spermiogenesis and normal male fertility, probably by promoting colocalization of JAM2 and JAM3 at contact sites between germ cells and Sertoli cells. Mediates ER stress-induced unconventional (ER/Golgi-independent) trafficking of core-glycosylated CFTR to cell membrane. This Homo sapiens (Human) protein is Golgi reassembly-stacking protein 2 (GORASP2).